Here is a 335-residue protein sequence, read N- to C-terminus: DNA-directed RNA polymerase subunit alpha (335 aa).

The tract at residues 1 to 233 (MQRNWRELIK…DQLTIFINFE (233 aa)) is alpha N-terminal domain (alpha-NTD). Residues 249-335 (FNDHLFRSVD…DIENRRKEQE (87 aa)) form an alpha C-terminal domain (alpha-CTD) region.

This sequence belongs to the RNA polymerase alpha chain family. As to quaternary structure, homodimer. The RNAP catalytic core consists of 2 alpha, 1 beta, 1 beta' and 1 omega subunit. When a sigma factor is associated with the core the holoenzyme is formed, which can initiate transcription.

The enzyme catalyses RNA(n) + a ribonucleoside 5'-triphosphate = RNA(n+1) + diphosphate. DNA-dependent RNA polymerase catalyzes the transcription of DNA into RNA using the four ribonucleoside triphosphates as substrates. This is DNA-directed RNA polymerase subunit alpha from Syntrophobacter fumaroxidans (strain DSM 10017 / MPOB).